Here is a 202-residue protein sequence, read N- to C-terminus: MDFVNNDTRQIAKNLLGVKVIYQDTTQTYTGYIVETEAYLGLNDRAAHGYGGKITPKVTSLYKRGGTIYAHVMHTHLLINFVTKSEGIPEGVLIRAIEPEDGLSAMFRNRGKKGYEVTNGPGKWTKAFNIPRAIDGATLNDCRLSIDTKNRKYPKDIIASPRIGIPNKGDWTHKSLRYTVKGNPFVSRMRKSDCMFPEDTWK.

The protein belongs to the DNA glycosylase MPG family.

The protein is Putative 3-methyladenine DNA glycosylase of Staphylococcus aureus (strain bovine RF122 / ET3-1).